Consider the following 200-residue polypeptide: Large ribosomal subunit protein uL4 (200 aa).

The disordered stretch occupies residues 43-71 (RAQKTRAEVSGSGKKPWRQKGTGRARSGD).

The protein belongs to the universal ribosomal protein uL4 family. As to quaternary structure, part of the 50S ribosomal subunit.

Functionally, one of the primary rRNA binding proteins, this protein initially binds near the 5'-end of the 23S rRNA. It is important during the early stages of 50S assembly. It makes multiple contacts with different domains of the 23S rRNA in the assembled 50S subunit and ribosome. Its function is as follows. Forms part of the polypeptide exit tunnel. The chain is Large ribosomal subunit protein uL4 from Actinobacillus pleuropneumoniae serotype 5b (strain L20).